A 975-amino-acid chain; its full sequence is Glycine dehydrogenase (decarboxylating) (975 aa).

N6-(pyridoxal phosphate)lysine is present on Lys-723.

Belongs to the GcvP family. The glycine cleavage system is composed of four proteins: P, T, L and H. It depends on pyridoxal 5'-phosphate as a cofactor.

The enzyme catalyses N(6)-[(R)-lipoyl]-L-lysyl-[glycine-cleavage complex H protein] + glycine + H(+) = N(6)-[(R)-S(8)-aminomethyldihydrolipoyl]-L-lysyl-[glycine-cleavage complex H protein] + CO2. Its function is as follows. The glycine cleavage system catalyzes the degradation of glycine. The P protein binds the alpha-amino group of glycine through its pyridoxal phosphate cofactor; CO(2) is released and the remaining methylamine moiety is then transferred to the lipoamide cofactor of the H protein. In Burkholderia mallei (strain NCTC 10247), this protein is Glycine dehydrogenase (decarboxylating).